We begin with the raw amino-acid sequence, 444 residues long: MSPIAVTSQTPATEVPSVKEIPQVITKSSPVENLILTTYPEDSSPIPLQWGAPSTDSRGPIIATRYKEGLAKHNAIGAHSGSYCVYHALAVGTKQLDPEHVADYTNSQPAFAVPEQKTWYNDEDIVAMDPFGHLTPYLFDEVSTKENVEIRPTIAVTKATMQLFEMKDAVEKGRLEVDGEVVINKNGDLNVSKVAVEPVWYLPGVAKRFGVTEEELRKALFEDTNGMYPELVTRPDIKVFLPPIGGLTVYIFGNPDFVSDPSKKLALRVHDECNGSDVFGSDICTCRPYLMFGIEEAVKEAQNGGSGVVVYFRKEGRALGEVTKYLVYNARKRGGDTADEYFHRTECIAGVRDMRFQQLMPDVLKWLGISKIDRMLSMSNMKHDAIVDQGIPIIERIPIPDELVPPDSRVEIDAKINSGYFTNGKVMDKNELKSVQGRTWNDVK.

268–272 (RVHDE) contacts GTP. Positions 273, 284, and 286 each coordinate Zn(2+). GTP is bound at residue 315–317 (EGR). The active-site Proton acceptor is aspartate 353. Catalysis depends on arginine 355, which acts as the Nucleophile. Positions 377 and 382 each coordinate GTP.

The protein belongs to the GTP cyclohydrolase II family.

The protein resides in the cytoplasm. The protein localises to the nucleus. Its function is as follows. Involved in uracil catabolism. In Lachancea kluyveri (Yeast), this protein is Putative GTP cyclohydrolase URC1 (URC1).